The sequence spans 212 residues: MAYAYLFKYIIIGDTGVGKSCLLLQFTDKRFQPVHDLTIGVEFGARMITIDGKQIKLQIWDTAGQESFRSITRSYYRGAAGALLVYDITRRDTFNHLTTWLEDARQHSNSNMVIMLIGNKSDLESRREVKKEEGEAFAREHGLIFMETSAKTASNVEEAFINTAKEIYEKIQEGVFDINNEANGIKIGPQHGATNATHAGNQGGQQAGGGCC.

Ala2 is subject to N-acetylalanine. The required for interaction with PRKCI stretch occupies residues Ala2–Lys19. GTP-binding residues include Gly16, Val17, Gly18, Lys19, Ser20, Cys21, and Thr38. A Mg(2+)-binding site is contributed by Ser20. A Switch 1 motif is present at residues Leu37–Glu42. Mg(2+) contacts are provided by Thr38 and Asp61. A Switch 2 motif is present at residues Ala63–Thr72. GTP-binding residues include Gly64, Asn119, Lys120, Asp122, Ala150, and Lys151. 2 S-geranylgeranyl cysteine lipidation sites follow: Cys211 and Cys212.

Belongs to the small GTPase superfamily. Rab family. Interacts with PRKCI. Interacts with TRIP11. Interacts (in GTP-bound form) with GARIN1B. Interacts (GTP-bound) with HOPS complex component VPS39; interaction contributes to obtaining a functional HOPS complex that promotes autophagosome-lysosome membrane fusion driven by STX17-SNAP29-VAMP8. May interact with VPS41. Mg(2+) serves as cofactor. Prenylated. Prenylation is required for association with cellular membranes. In terms of tissue distribution, brain and parietal cells.

Its subcellular location is the endoplasmic reticulum-Golgi intermediate compartment membrane. It localises to the melanosome. It is found in the endoplasmic reticulum membrane. The protein resides in the golgi apparatus membrane. The protein localises to the cytoplasmic vesicle. Its subcellular location is the secretory vesicle. It localises to the acrosome. It is found in the autophagosome membrane. The enzyme catalyses GTP + H2O = GDP + phosphate + H(+). Its activity is regulated as follows. Regulated by guanine nucleotide exchange factors (GEFs) which promote the exchange of bound GDP for free GTP, GTPase activating proteins (GAPs) which increase the GTP hydrolysis activity, and GDP dissociation inhibitors (GDIs) which inhibit the dissociation of the nucleotide from the GTPase. Functionally, the small GTPases Rab are key regulators of intracellular membrane trafficking, from the formation of transport vesicles to their fusion with membranes. Rabs cycle between active GTP-bound and inactive GDP-bound states. In their active state, drive transport of vesicular carriers from donor organelles to acceptor organelles to regulate the membrane traffic that maintains organelle identity and morphology. RAB2A regulates autophagy by promoting autophagosome-lysosome fusion via recruitment of the HOPS endosomal tethering complex; this process involves autophagosomal RAB2A and lysosomal RAB39A recruitment of HOPS subcomplexes VPS39-VPS11 and VPS41-VPS16-VPS18-VPS33A, respectively, which assemble into a functional complex to mediate membrane tethering and SNAREs-driven membrane fusion. Required for protein transport from the endoplasmic reticulum to the Golgi complex. Regulates the compacted morphology of the Golgi. Together with RAB2B, redundantly required for efficient autophagic flux. The polypeptide is Ras-related protein Rab-2A (RAB2A) (Oryctolagus cuniculus (Rabbit)).